The chain runs to 214 residues: Thiamine import ATP-binding protein ThiQ (214 aa).

One can recognise an ABC transporter domain in the interval 2–212 (IKLNTIFDYP…KNGQATEREI (211 aa)). 31–38 (GESGAGKS) lines the ATP pocket.

This sequence belongs to the ABC transporter superfamily. Thiamine importer (TC 3.A.1.19.1) family. As to quaternary structure, the complex is composed of two ATP-binding proteins (ThiQ), two transmembrane proteins (ThiP) and a solute-binding protein (ThiB).

The protein resides in the cell inner membrane. The catalysed reaction is thiamine(out) + ATP + H2O = thiamine(in) + ADP + phosphate + H(+). In terms of biological role, part of the ABC transporter complex ThiBPQ involved in thiamine import. Responsible for energy coupling to the transport system. The polypeptide is Thiamine import ATP-binding protein ThiQ (Histophilus somni (strain 129Pt) (Haemophilus somnus)).